The sequence spans 107 residues: Disintegrin lebestatin (107 aa).

Positions 1–20 (MIQVLLVIICLAVFPFQGSS) are cleaved as a signal peptide. Residues 21–64 (KTLKSGNVNDYEVVNPGTVTGLPKGAVEEKHEPMKGNTLQKFPL) constitute a propeptide that is removed on maturation. 4 cysteine pairs are disulfide-bonded: Cys65-Cys74, Cys70-Cys93, Cys71-Cys98, and Cys83-Cys100. The Disintegrin domain maps to 65–105 (CTTGPCCRQCKLKPAGTTCWKTSRTSHYCTGKSCDCPSYPG). Positions 85–87 (KTS) match the Cell attachment site; atypical (KTS) motif. A propeptide spanning residues 106–107 (NG) is cleaved from the precursor.

Monomer. Expressed by the venom gland.

The protein localises to the secreted. Functionally, specifically interacts with the alpha-1/beta-1 integrin (ITGA1/ITGB1). Exhibits highly inhibitory effects on cell adhesion and cell migration to collagens I and IV. Also shows in vivo anti-angiogenic activity. This Macrovipera lebetinus (Levantine viper) protein is Disintegrin lebestatin.